The following is a 292-amino-acid chain: General transcription factor IIE subunit 2 (292 aa).

Met1 carries the N-acetylmethionine modification. Residues 17 to 64 (LSTPVVEKRAVPSESPSSSSSKKKKAKVEHGGSSGSKQNSDHNNGSFN) are disordered. Positions 51-63 (GSKQNSDHNNGSF) are enriched in polar residues. The residue at position 62 (Ser62) is a Phosphoserine. Positions 67–147 (ALSGSSGYKF…YAFKPKYNLK (81 aa)) form a DNA-binding region, TFIIE beta. Lys75 is modified (N6-acetyllysine). A disordered region spans residues 245-277 (SMQESGPKKVASIQRRKKPASQKKRRFKTHNEH). A compositionally biased stretch (basic residues) spans 258–272 (QRRKKPASQKKRRFK).

Belongs to the TFIIE beta subunit family. In terms of assembly, tetramer of two alpha and two beta chains. Interacts with FACT subunit SUPT16H. Interacts with ATF7IP. Interacts with SND1. Part of TBP-based Pol II pre-initiation complex (PIC), in which Pol II core assembles with general transcription factors and other specific initiation factors including GTF2E1, GTF2E2, GTF2F1, GTF2F2, TCEA1, ERCC2, ERCC3, GTF2H2, GTF2H3, GTF2H4, GTF2H5, GTF2A1, GTF2A2, GTF2B and TBP; this large multi-subunit PIC complex mediates DNA unwinding and targets Pol II core to the transcription start site where the first phosphodiester bond forms.

It localises to the nucleus. Functionally, recruits TFIIH to the initiation complex and stimulates the RNA polymerase II C-terminal domain kinase and DNA-dependent ATPase activities of TFIIH. Both TFIIH and TFIIE are required for promoter clearance by RNA polymerase. The chain is General transcription factor IIE subunit 2 (Gtf2e2) from Mus musculus (Mouse).